The sequence spans 226 residues: Ribonuclease 3 (226 aa).

The 123-residue stretch at 6-128 (INRLQRKLGY…LIGGVFLDSD (123 aa)) folds into the RNase III domain. A Mg(2+)-binding site is contributed by glutamate 41. Aspartate 45 is a catalytic residue. Positions 114 and 117 each coordinate Mg(2+). Glutamate 117 is a catalytic residue. In terms of domain architecture, DRBM spans 155 to 225 (DPKTRLQEFL…AEQALIKLEL (71 aa)).

This sequence belongs to the ribonuclease III family. Homodimer. Requires Mg(2+) as cofactor.

Its subcellular location is the cytoplasm. It carries out the reaction Endonucleolytic cleavage to 5'-phosphomonoester.. In terms of biological role, digests double-stranded RNA. Involved in the processing of primary rRNA transcript to yield the immediate precursors to the large and small rRNAs (23S and 16S). Processes some mRNAs, and tRNAs when they are encoded in the rRNA operon. Processes pre-crRNA and tracrRNA of type II CRISPR loci if present in the organism. The protein is Ribonuclease 3 of Serratia proteamaculans (strain 568).